We begin with the raw amino-acid sequence, 395 residues long: MLRWLTAGESHGPALVAVLEGLPAGVEITTTQIGDALARRRLGYGRGARMSFERDEVRLLGGVRHGLTQGGPIAVEIGNTEWPKWETVMAADPVDPAALTGARGAPLTRPRPGHADLIGMTKYGFDEARPVLERASARETASRVALGRVAAAFLEQAAGVRLVSHVVAIGPVSAPDDADLPTPDDVAALDADPIRCFDAATSAAMVAEIDDAQKAGDTLGGVVEVLAYGLPPGLGSYVQSDRRLDGRLAGVLMGIQAIKGVEVGDGFRTAARRGSAAHDEIERATDGRVRRRTNRAGGVEGGMTNGEVLRVRAAMKPISTVPRALDTIDTATGDAAKAIHQRSDVCAVAPAAVVAEAMVALVLAQALLEKVGGDSVAESARNLTSYLEAIPEQQR.

Positions 40 and 46 each coordinate NADP(+). Residues 134 to 136 (RAS), 256 to 257 (QA), G301, 316 to 320 (KPIST), and R342 each bind FMN.

The protein belongs to the chorismate synthase family. In terms of assembly, homotetramer. The cofactor is FMNH2.

The enzyme catalyses 5-O-(1-carboxyvinyl)-3-phosphoshikimate = chorismate + phosphate. The protein operates within metabolic intermediate biosynthesis; chorismate biosynthesis; chorismate from D-erythrose 4-phosphate and phosphoenolpyruvate: step 7/7. In terms of biological role, catalyzes the anti-1,4-elimination of the C-3 phosphate and the C-6 proR hydrogen from 5-enolpyruvylshikimate-3-phosphate (EPSP) to yield chorismate, which is the branch point compound that serves as the starting substrate for the three terminal pathways of aromatic amino acid biosynthesis. This reaction introduces a second double bond into the aromatic ring system. The chain is Chorismate synthase from Beutenbergia cavernae (strain ATCC BAA-8 / DSM 12333 / CCUG 43141 / JCM 11478 / NBRC 16432 / NCIMB 13614 / HKI 0122).